We begin with the raw amino-acid sequence, 246 residues long: High mobility group protein 1 (246 aa).

The segment at residues 106-179 is a DNA-binding region (HMG box); it reads PKKPLTVFFA…NYQREKSKYL (74 aa). Residues 179 to 246 form a disordered region; sequence LEAKKNGTLP…KKKDKSNSSI (68 aa). Residues 214–227 show a composition bias toward basic and acidic residues; that stretch reads PVEKRPHDDDGSSE. A compositionally biased stretch (basic residues) spans 228-238; it reads KKKKKKKKDKK.

In terms of assembly, interacts with FPR1. Interacts with an unidentified DNA helicase. Associates with rDNA.

The protein localises to the nucleus. It localises to the nucleolus. Functionally, DNA-binding protein that is probably part of the rDNA transcription apparatus. Acts synergetically with the RPA49 subunit of RNA polymerase I during rDNA transcription. May participate in mutagenesis control. The protein is High mobility group protein 1 (HMO1) of Saccharomyces cerevisiae (strain ATCC 204508 / S288c) (Baker's yeast).